A 426-amino-acid chain; its full sequence is Histidine--tRNA ligase (426 aa).

This sequence belongs to the class-II aminoacyl-tRNA synthetase family. In terms of assembly, homodimer.

Its subcellular location is the cytoplasm. It carries out the reaction tRNA(His) + L-histidine + ATP = L-histidyl-tRNA(His) + AMP + diphosphate + H(+). This is Histidine--tRNA ligase from Streptococcus agalactiae serotype III (strain NEM316).